We begin with the raw amino-acid sequence, 87 residues long: Acyl carrier protein 3 (87 aa).

The Carrier domain maps to 1–79 (MSNPTVLDQI…DLVTYIEAAL (79 aa)). Ser-39 is modified (O-(pantetheine 4'-phosphoryl)serine).

It belongs to the acyl carrier protein (ACP) family. 4'-phosphopantetheine is transferred from CoA to a specific serine of apo-ACP by AcpS. This modification is essential for activity because fatty acids are bound in thioester linkage to the sulfhydryl of the prosthetic group.

Its subcellular location is the cytoplasm. Its pathway is lipid metabolism; fatty acid biosynthesis. Functionally, carrier of the growing fatty acid chain in fatty acid biosynthesis. The protein is Acyl carrier protein 3 of Ralstonia nicotianae (strain ATCC BAA-1114 / GMI1000) (Ralstonia solanacearum).